The primary structure comprises 294 residues: Deubiquitinase OTUD6B (294 aa).

Positions 85–120 (VTSLDLGSEEPVQQPRVSKAQKRREKKAAQEKERDD) are disordered. Positions 111–120 (KAAQEKERDD) are enriched in basic and acidic residues. Residues 150-287 (LQIRQIPSDG…GEHYNSVEQL (138 aa)) enclose the OTU domain. The segment at 155-161 (IPSDGHC) is cys-loop. Asp-158 is a catalytic residue. Cys-161 serves as the catalytic Nucleophile. Residues 222–232 (IVNTPAWGGQL) are variable-loop. The tract at residues 270 to 280 (YMRHAYGLGEH) is his-loop. Residue His-280 is part of the active site.

It carries out the reaction Thiol-dependent hydrolysis of ester, thioester, amide, peptide and isopeptide bonds formed by the C-terminal Gly of ubiquitin (a 76-residue protein attached to proteins as an intracellular targeting signal).. Deubiquitinating enzyme that may play a role in the ubiquitin-dependent regulation of different cellular processes. The chain is Deubiquitinase OTUD6B (otud6b) from Xenopus laevis (African clawed frog).